Consider the following 53-residue polypeptide: MQKWVCVPCGYEYDPADGDPENGIEPGTAFEDLPEDWVCPVCGVDKSFFEPVS.

One can recognise a Rubredoxin-like domain in the interval 1 to 53 (MQKWVCVPCGYEYDPADGDPENGIEPGTAFEDLPEDWVCPVCGVDKSFFEPVS). Residues Cys6, Cys9, Cys39, and Cys42 each coordinate Fe cation.

The protein belongs to the rubredoxin family. As to quaternary structure, monomer. Fe(3+) is required as a cofactor.

Its function is as follows. Functions as an electron acceptor for pyruvate ferredoxin oxidoreductase (PFOR). This is Rubredoxin 3 (rub3) from Chlorobaculum tepidum (strain ATCC 49652 / DSM 12025 / NBRC 103806 / TLS) (Chlorobium tepidum).